The sequence spans 218 residues: CD99 antigen-like protein 2 (218 aa).

The N-terminal stretch at 1 to 25 (MVAWRSAFLVCLAFSLATLVQRGSG) is a signal peptide. Residues 26 to 136 (DFDDFNLKDA…PGSGMVAETG (111 aa)) lie on the Extracellular side of the membrane. Residues 72 to 128 (LADALDDRNDRDDGRRKPIAGGGGFSDKDLEDIVGGGEYKPDKGKGDGRYGSNDDPG) form a disordered region. 2 stretches are compositionally biased toward basic and acidic residues: residues 76-87 (LDDRNDRDDGRR) and 110-119 (YKPDKGKGDG). O-linked (Xyl...) (chondroitin sulfate) serine glycosylation occurs at Ser-129. The chain crosses the membrane as a helical span at residues 137–157 (TIAGVASALAMALIGAVSSYI). The Cytoplasmic segment spans residues 158 to 218 (SYQQKKFCFS…EPPPSEPARI (61 aa)).

Belongs to the CD99 family. In terms of processing, O-glycosylated.

The protein resides in the cell membrane. It localises to the cell junction. Its subcellular location is the secreted. In terms of biological role, plays a role in a late step of leukocyte extravasation helping cells to overcome the endothelial basement membrane. Acts at the same site as, but independently of, PECAM1. Homophilic adhesion molecule, but these interactions may not be required for cell aggregation. The polypeptide is CD99 antigen-like protein 2 (CD99L2) (Pongo abelii (Sumatran orangutan)).